The sequence spans 31 residues: ALWKDVLKKIGTVALHAGKAALGAVADTISQ.

Residue Gln-31 is modified to Glutamine amide.

In terms of tissue distribution, expressed by the skin glands.

It localises to the secreted. In terms of biological role, has antimicrobial activity. In Phyllomedusa trinitatis (Trinidad leaf frog), this protein is Dermaseptin-7.1TR.